The primary structure comprises 113 residues: U11-theraphotoxin-Hhn1p (113 aa).

The first 21 residues, 1-21 (MNTVRVTFLLVFVLAVSLGQA), serve as a signal peptide directing secretion. Positions 22 to 74 (DKDENRMEMQEKTEQGKSYLDFAENLLLQKLEELEAKLLEEDSEESRNSRQKR) are excised as a propeptide. The tract at residues 61–83 (EEDSEESRNSRQKRCIGEGVPCD) is disordered. 3 disulfide bridges follow: Cys-75–Cys-90, Cys-82–Cys-95, and Cys-89–Cys-110.

This sequence belongs to the neurotoxin 14 (magi-1) family. 01 (HNTX-16) subfamily. Expressed by the venom gland.

It is found in the secreted. Functionally, probable ion channel inhibitor. The sequence is that of U11-theraphotoxin-Hhn1p from Cyriopagopus hainanus (Chinese bird spider).